The primary structure comprises 514 residues: Peptide chain release factor 3 (514 aa).

In terms of domain architecture, tr-type G spans 8-268; sequence KKRRTFAIIS…IFLKFAPEPH (261 aa). GTP-binding positions include 17-24, 85-89, and 139-142; these read SHPDAGKT, DTPGH, and NKLD.

The protein belongs to the TRAFAC class translation factor GTPase superfamily. Classic translation factor GTPase family. PrfC subfamily.

The protein localises to the cytoplasm. Its function is as follows. Increases the formation of ribosomal termination complexes and stimulates activities of RF-1 and RF-2. It binds guanine nucleotides and has strong preference for UGA stop codons. It may interact directly with the ribosome. The stimulation of RF-1 and RF-2 is significantly reduced by GTP and GDP, but not by GMP. The chain is Peptide chain release factor 3 from Streptococcus pneumoniae serotype 2 (strain D39 / NCTC 7466).